The primary structure comprises 904 residues: MSGGSQVHIFWGAPVAPLKMTVSQDTASLMSVADPWKKIHLLYSQHSLYLKDEKQHKNLENYEVPESVGSPDFSGHFLANCMNRHVHVKDDFVRSVSETQNIESQNIHSSRLSDITSSNMQICGFKSTVPHLTEEEKYQKLLSENKIIDEQPKHQSDICGQNFNTNLFQLGHKCAAMLDLVCSTEQINIGPEVVQRECVSTEYHEIQNQCLGLFSSNAVDKSRSEAAVRKASDLKISTDTEFLSIITSSQVAFLAQKKDKGRSPINKGNVNMETEPKASYREIRIPEENSIQLDGFTEAYEGGQNQAYSLELFSPVCRKTENSRIHINSDKGLEEHIGSQELFNSEDKLPPNEIHIELCSSGILCSQLNTFHKSAIKRSCTSEDKVGQSEALSRVLQVAKKMKLISNGGDSAVEMDRRNVSEFKGIKKTSLIKNCDSKSQKYNCLVMVLSPCHVKEINIKFGPNSGSKVPLATVTVIDQSETKKKVFLWRTAAFWAFTVFLGDIILLTDVVIREDQWVGETVLQSTFSSQLLNLGSYSSIQPEEYSSVVSDVVLQDLLAYVSSKHSYLRDLPPRQPQRVNSIDFVELEHLQPDVLVHAVLRVVDFTILTEAVYSYRGQKQKKVMLTVEQAQDQHYVLVLWGPGAAWYPQLQRKKGYIWEFKYLFVQRNYTLENLELHTTPWSSCECLFNDDIRAITFKAKFQKSAPSFVKIPDLATHLEDKCSGVVLIQAQISELAFPITAAQKIALNAHSSLKSIFSSLPNIVYTGCAKCGLELETDENRIYKQCFSCLPFTMKKIYYRPALMTVVDGRHDVCIRVESKLIEKILLNISADCLNRVIVPSSEITYGMVVADLFHSLLAVSAEPCVLKIQSLFVLDENSYPLQQDFSLLDFYSDIVKHGADARL.

The interval 1–60 is sufficient for interaction with SHLD3 and MAD2L2; it reads MSGGSQVHIFWGAPVAPLKMTVSQDTASLMSVADPWKKIHLLYSQHSLYLKDEKQHKNLE. The interval 1–568 is interaction with ASTE1; sequence MSGGSQVHIF…AYVSSKHSYL (568 aa). A mediates interaction with SHLD1 region spans residues 721 to 891; the sequence is KCSGVVLIQA…LQQDFSLLDF (171 aa).

This sequence belongs to the SHLD2 family. Component of the shieldin complex, consisting of SHLD1, SHLD2, SHLD3 and MAD2L2/REV7. Within the complex, SHLD2 forms a scaffold which interacts with a SHLD3-MAD2L2 subcomplex via its N-terminus, and with SHLD1 via its C-terminus. Interacts with TP53BP1. Interacts with RIF1. Interacts with ASTE1.

The protein localises to the chromosome. In terms of biological role, component of the shieldin complex, which plays an important role in repair of DNA double-stranded breaks (DSBs). During G1 and S phase of the cell cycle, the complex functions downstream of TP53BP1 to promote non-homologous end joining (NHEJ) and suppress DNA end resection. Mediates various NHEJ-dependent processes including immunoglobulin class-switch recombination, and fusion of unprotected telomeres. This is Shieldin complex subunit 2 from Pongo abelii (Sumatran orangutan).